The primary structure comprises 284 residues: Bifunctional protein FolD (284 aa).

NADP(+) contacts are provided by residues Gly-165–Ser-167 and Ser-190.

This sequence belongs to the tetrahydrofolate dehydrogenase/cyclohydrolase family. As to quaternary structure, homodimer.

It carries out the reaction (6R)-5,10-methylene-5,6,7,8-tetrahydrofolate + NADP(+) = (6R)-5,10-methenyltetrahydrofolate + NADPH. It catalyses the reaction (6R)-5,10-methenyltetrahydrofolate + H2O = (6R)-10-formyltetrahydrofolate + H(+). It functions in the pathway one-carbon metabolism; tetrahydrofolate interconversion. In terms of biological role, catalyzes the oxidation of 5,10-methylenetetrahydrofolate to 5,10-methenyltetrahydrofolate and then the hydrolysis of 5,10-methenyltetrahydrofolate to 10-formyltetrahydrofolate. In Streptococcus uberis (strain ATCC BAA-854 / 0140J), this protein is Bifunctional protein FolD.